The following is a 293-amino-acid chain: MALRLDGKALAKELEQRLAQQVRSGCAKAGRPPGLAVLRVGDDPASAVYVANKEKACARVGVESFGAHLPASSQPETLLKTIQALNADERVDGILLQLPLPAGLDETPLLAAIDPDKDADGLHTLNLGRLLKGEPGPRSCTPAGVMAMLRSQGIDPSGKRAVVVGRSILVGQPMALMLQAANATVMVAHSRTRDLAALTRQADILVVAAGRPEMIGAEHVAPGAVVVDVGIHRRPEGGLCGDVNAAELEPLAAALSPVPGGVGPMTVTMLLVNTVLAWSRRHQLDHDLADLVP.

Residues 165 to 167, S190, and I231 each bind NADP(+); that span reads GRS.

This sequence belongs to the tetrahydrofolate dehydrogenase/cyclohydrolase family. In terms of assembly, homodimer.

The enzyme catalyses (6R)-5,10-methylene-5,6,7,8-tetrahydrofolate + NADP(+) = (6R)-5,10-methenyltetrahydrofolate + NADPH. It catalyses the reaction (6R)-5,10-methenyltetrahydrofolate + H2O = (6R)-10-formyltetrahydrofolate + H(+). Its pathway is one-carbon metabolism; tetrahydrofolate interconversion. Catalyzes the oxidation of 5,10-methylenetetrahydrofolate to 5,10-methenyltetrahydrofolate and then the hydrolysis of 5,10-methenyltetrahydrofolate to 10-formyltetrahydrofolate. This chain is Bifunctional protein FolD, found in Synechococcus sp. (strain WH7803).